Reading from the N-terminus, the 264-residue chain is Phycocyanobilin:ferredoxin oxidoreductase (264 aa).

It belongs to the HY2 family.

The enzyme catalyses (2R,3Z)-phycocyanobilin + 4 oxidized [2Fe-2S]-[ferredoxin] = biliverdin IXalpha + 4 reduced [2Fe-2S]-[ferredoxin] + 4 H(+). Catalyzes the four-electron reduction of biliverdin IX-alpha (2-electron reduction at both the A and D rings); the reaction proceeds via an isolatable 2-electron intermediate, 181,182-dihydrobiliverdin. The protein is Phycocyanobilin:ferredoxin oxidoreductase of Prochlorococcus marinus (strain MIT 9303).